The chain runs to 318 residues: Phosphoenolpyruvate transferase (318 aa).

Asp50 lines the 7,8-didemethyl-8-hydroxy-5-deazariboflavin pocket.

The protein belongs to the CofD family. In terms of assembly, homodimer. Requires Mg(2+) as cofactor.

The enzyme catalyses enolpyruvoyl-2-diphospho-5'-guanosine + 7,8-didemethyl-8-hydroxy-5-deazariboflavin = dehydro coenzyme F420-0 + GMP + H(+). Its pathway is cofactor biosynthesis; coenzyme F420 biosynthesis. Functionally, catalyzes the transfer of the phosphoenolpyruvate moiety from enoylpyruvoyl-2-diphospho-5'-guanosine (EPPG) to 7,8-didemethyl-8-hydroxy-5-deazariboflavin (FO) with the formation of dehydro coenzyme F420-0 and GMP. The sequence is that of Phosphoenolpyruvate transferase from Streptomyces griseus subsp. griseus (strain JCM 4626 / CBS 651.72 / NBRC 13350 / KCC S-0626 / ISP 5235).